Reading from the N-terminus, the 612-residue chain is Threonine--tRNA ligase (612 aa).

The segment at 218–509 (NHRKLGVELG…LSEHFGGNFP (292 aa)) is catalytic. Cys310, His361, and His486 together coordinate Zn(2+).

The protein belongs to the class-II aminoacyl-tRNA synthetase family. Homodimer. Zn(2+) serves as cofactor.

The protein resides in the cytoplasm. The catalysed reaction is tRNA(Thr) + L-threonine + ATP = L-threonyl-tRNA(Thr) + AMP + diphosphate + H(+). Functionally, catalyzes the attachment of threonine to tRNA(Thr) in a two-step reaction: L-threonine is first activated by ATP to form Thr-AMP and then transferred to the acceptor end of tRNA(Thr). Also edits incorrectly charged L-seryl-tRNA(Thr). The sequence is that of Threonine--tRNA ligase from Helicobacter pylori (strain Shi470).